Consider the following 2144-residue polypeptide: Alpha-protein kinase 2 (2144 aa).

Residues 7–105 (PERRTLCFLS…ICCSASLEVQ (99 aa)) form the Ig-like 1 domain. Cysteines 33 and 98 form a disulfide. Disordered stretches follow at residues 425 to 473 (ETAK…LQTM), 500 to 575 (SLAR…GAPG), 727 to 775 (EDNE…NVGS), 845 to 864 (QTQG…DGKS), 881 to 907 (EASE…TLPY), 1011 to 1065 (SCEA…PEGQ), 1316 to 1340 (DPVE…EMEM), 1471 to 1509 (GPGE…ETEV), 1565 to 1587 (CGNH…PKGN), 1629 to 1696 (ECES…GSGH), and 1720 to 1754 (ENSR…PCKA). A compositionally biased stretch (basic and acidic residues) spans 500-511 (SLARERTDEKYP). Positions 853-864 (RSTDKRSQDGKS) are enriched in basic and acidic residues. A compositionally biased stretch (polar residues) spans 897-906 (PPSTFSSTLP). The segment covering 1574–1587 (DLTNTPCTSSPKGN) has biased composition (polar residues). 2 stretches are compositionally biased toward basic and acidic residues: residues 1631-1645 (ESEK…RDPC) and 1732-1754 (PKFE…PCKA). In terms of domain architecture, Ig-like 2 spans 1759 to 1847 (PVLLKRIQAE…GKVTAEFNLT (89 aa)). Residues cysteine 1781 and cysteine 1831 are joined by a disulfide bond. Residues 1874–2106 (KEDVFNDSYF…YCKMLGLKSL (233 aa)) form the Alpha-type protein kinase domain. The disordered stretch occupies residues 2109–2144 (NSQKPKKPIVGKGRVPTNATQVKTPESETPPAERKT).

It belongs to the protein kinase superfamily. Alpha-type protein kinase family. ALPK subfamily.

Its subcellular location is the basolateral cell membrane. The catalysed reaction is L-seryl-[protein] + ATP = O-phospho-L-seryl-[protein] + ADP + H(+). It carries out the reaction L-threonyl-[protein] + ATP = O-phospho-L-threonyl-[protein] + ADP + H(+). Its function is as follows. Protein kinase that recognizes phosphorylation sites in which the surrounding peptides have an alpha-helical conformation. Regulates cardiac development and cardiomyocyte differentiation by negatively regulating Wnt/beta-catenin signaling. This is Alpha-protein kinase 2 from Mus musculus (Mouse).